The sequence spans 451 residues: Probable glycine dehydrogenase (decarboxylating) subunit 1 (451 aa).

It belongs to the GcvP family. N-terminal subunit subfamily. As to quaternary structure, the glycine cleavage system is composed of four proteins: P, T, L and H. In this organism, the P 'protein' is a heterodimer of two subunits.

It catalyses the reaction N(6)-[(R)-lipoyl]-L-lysyl-[glycine-cleavage complex H protein] + glycine + H(+) = N(6)-[(R)-S(8)-aminomethyldihydrolipoyl]-L-lysyl-[glycine-cleavage complex H protein] + CO2. Its function is as follows. The glycine cleavage system catalyzes the degradation of glycine. The P protein binds the alpha-amino group of glycine through its pyridoxal phosphate cofactor; CO(2) is released and the remaining methylamine moiety is then transferred to the lipoamide cofactor of the H protein. The protein is Probable glycine dehydrogenase (decarboxylating) subunit 1 of Staphylococcus aureus (strain MSSA476).